The following is a 386-amino-acid chain: Homogentisate solanesyltransferase, chloroplastic (386 aa).

A chloroplast-targeting transit peptide spans 1–69; it reads MELSISQSPR…STNYRKISIR (69 aa). 8 helical membrane-spanning segments follow: residues 130–150, 181–201, 204–220, 225–245, 259–279, 306–326, 335–355, and 365–385; these read VLKA…IVGI, LVIF…GPFI, LYSL…VPPL, FPVA…NFGV, WSAP…VIAI, IAFL…SLAF, SLMI…TWVL, and ISGY…LFPF.

Belongs to the UbiA prenyltransferase family.

The protein localises to the plastid. It localises to the chloroplast membrane. It catalyses the reaction all-trans-nonaprenyl diphosphate + homogentisate + H(+) = 2-methyl-6-(all-trans-nonaprenyl)benzene-1,4-diol + CO2 + diphosphate. Its activity is regulated as follows. Inhibited by haloxydine (3,5-dichloro-2,6-difluoro-4-haloxypyridine). Its function is as follows. Involved in the synthesis of plastoquinone-9. Can use both homogentisic acid and 2,5-dihydroxyphenylacetic acid gamma-lactone as prenyl acceptors, and solanesyl diphosphate &gt; farnesyl diphosphate &gt; geranylgeranyl diphosphate &gt;&gt; phytyl diphosphate as prenyl donors. Do not catalyze the decardoxylation of homogentisate uncoupled from prenylation. The chain is Homogentisate solanesyltransferase, chloroplastic (HST) from Arabidopsis thaliana (Mouse-ear cress).